The primary structure comprises 244 residues: Venom nerve growth factor (244 aa).

Positions 1–18 are cleaved as a signal peptide; it reads MSMLCYTLIIAFLIGIWA. A propeptide spanning residues 19–125 is cleaved from the precursor; the sequence is APKSEDNVSL…SLNRNIRAKR (107 aa). 3 cysteine pairs are disulfide-bonded: cysteine 139–cysteine 204, cysteine 182–cysteine 232, and cysteine 192–cysteine 234. An N-linked (GlcNAc...) asparagine glycan is attached at asparagine 148.

It belongs to the NGF-beta family. In terms of assembly, homodimer; non-covalently linked. N-glycosylated. As to expression, expressed by the venom gland.

The protein localises to the secreted. Functionally, nerve growth factor is important for the development and maintenance of the sympathetic and sensory nervous systems. It stimulates division and differentiation of sympathetic and embryonic sensory neurons as well as basal forebrain cholinergic neurons in the brain. Its relevance in the snake venom is not clear. However, it has been shown to inhibit metalloproteinase-dependent proteolysis of platelet glycoprotein Ib alpha, suggesting a metalloproteinase inhibition to prevent metalloprotease autodigestion and/or protection against prey proteases. Binds a lipid between the two protein chains in the homodimer. The lipid-bound form promotes histamine relase from mouse mast cells, contrary to the lipid-free form. It promotes neurite outgrowth in rat PC12 pheochromocytoma cells. The chain is Venom nerve growth factor from Macrovipera lebetinus (Levantine viper).